A 341-amino-acid polypeptide reads, in one-letter code: Ketol-acid reductoisomerase (NADP(+)) (341 aa).

The KARI N-terminal Rossmann domain maps to 2–182 (TDIVYDKDAD…GGLRAGGIRT (181 aa)). Residues 25-28 (YGSQ), K48, S51, S53, and 83-86 (DQHQ) contribute to the NADP(+) site. The active site involves H108. G134 contacts NADP(+). The 146-residue stretch at 183 to 328 (TFTEETETDL…RELRKLFAWN (146 aa)) folds into the KARI C-terminal knotted domain. Mg(2+)-binding residues include D191, E195, E227, and E231. Residue S252 participates in substrate binding.

The protein belongs to the ketol-acid reductoisomerase family. Mg(2+) serves as cofactor.

It carries out the reaction (2R)-2,3-dihydroxy-3-methylbutanoate + NADP(+) = (2S)-2-acetolactate + NADPH + H(+). The catalysed reaction is (2R,3R)-2,3-dihydroxy-3-methylpentanoate + NADP(+) = (S)-2-ethyl-2-hydroxy-3-oxobutanoate + NADPH + H(+). The protein operates within amino-acid biosynthesis; L-isoleucine biosynthesis; L-isoleucine from 2-oxobutanoate: step 2/4. Its pathway is amino-acid biosynthesis; L-valine biosynthesis; L-valine from pyruvate: step 2/4. In terms of biological role, involved in the biosynthesis of branched-chain amino acids (BCAA). Catalyzes an alkyl-migration followed by a ketol-acid reduction of (S)-2-acetolactate (S2AL) to yield (R)-2,3-dihydroxy-isovalerate. In the isomerase reaction, S2AL is rearranged via a Mg-dependent methyl migration to produce 3-hydroxy-3-methyl-2-ketobutyrate (HMKB). In the reductase reaction, this 2-ketoacid undergoes a metal-dependent reduction by NADPH to yield (R)-2,3-dihydroxy-isovalerate. The sequence is that of Ketol-acid reductoisomerase (NADP(+)) from Clavibacter michiganensis subsp. michiganensis (strain NCPPB 382).